The chain runs to 218 residues: Ras-related protein RabT2 (218 aa).

A GTP-binding site is contributed by 32–39 (GDYKTGKG). An Effector region motif is present at residues 54-61 (VSSIGVDF). GTP contacts are provided by residues 80 to 84 (DANSC) and 140 to 143 (NKCD). Position 215 is a cysteine methyl ester (cysteine 215). Cysteine 215 is lipidated: S-geranylgeranyl cysteine. Residues 216–218 (NIL) constitute a propeptide, removed in mature form.

It belongs to the small GTPase superfamily. Rab family.

Its subcellular location is the cell membrane. This chain is Ras-related protein RabT2 (rabT2), found in Dictyostelium discoideum (Social amoeba).